Reading from the N-terminus, the 421-residue chain is Serine--tRNA ligase (421 aa).

225-227 contributes to the L-serine binding site; it reads TAE. Residues 256–258 and V272 each bind ATP; that span reads RSE. Residue E279 coordinates L-serine. 345 to 348 contacts ATP; it reads ETHS. Position 380 (T380) interacts with L-serine.

Belongs to the class-II aminoacyl-tRNA synthetase family. Type-1 seryl-tRNA synthetase subfamily. As to quaternary structure, homodimer. The tRNA molecule binds across the dimer.

Its subcellular location is the cytoplasm. It catalyses the reaction tRNA(Ser) + L-serine + ATP = L-seryl-tRNA(Ser) + AMP + diphosphate + H(+). The enzyme catalyses tRNA(Sec) + L-serine + ATP = L-seryl-tRNA(Sec) + AMP + diphosphate + H(+). Its pathway is aminoacyl-tRNA biosynthesis; selenocysteinyl-tRNA(Sec) biosynthesis; L-seryl-tRNA(Sec) from L-serine and tRNA(Sec): step 1/1. Functionally, catalyzes the attachment of serine to tRNA(Ser). Is also able to aminoacylate tRNA(Sec) with serine, to form the misacylated tRNA L-seryl-tRNA(Sec), which will be further converted into selenocysteinyl-tRNA(Sec). The sequence is that of Serine--tRNA ligase from Thermus thermophilus (strain ATCC 27634 / DSM 579 / HB8).